The chain runs to 199 residues: uncharacterized protein (199 aa).

This is an uncharacterized protein from Methanocaldococcus jannaschii (strain ATCC 43067 / DSM 2661 / JAL-1 / JCM 10045 / NBRC 100440) (Methanococcus jannaschii).